The primary structure comprises 246 residues: Ribonuclease 3 (246 aa).

Residues 30–152 (ISWIEKNLGH…MIGAIFLESG (123 aa)) form the RNase III domain. Position 65 (glutamate 65) interacts with Mg(2+). Aspartate 69 is a catalytic residue. Residues aspartate 138 and glutamate 141 each coordinate Mg(2+). Glutamate 141 is an active-site residue. Positions 177–246 (HPKSALQEWA…AQALLDILAQ (70 aa)) constitute a DRBM domain.

Belongs to the ribonuclease III family. Homodimer. It depends on Mg(2+) as a cofactor.

Its subcellular location is the cytoplasm. The catalysed reaction is Endonucleolytic cleavage to 5'-phosphomonoester.. In terms of biological role, digests double-stranded RNA. Involved in the processing of primary rRNA transcript to yield the immediate precursors to the large and small rRNAs (23S and 16S). Processes some mRNAs, and tRNAs when they are encoded in the rRNA operon. Processes pre-crRNA and tracrRNA of type II CRISPR loci if present in the organism. In Zymomonas mobilis subsp. mobilis (strain ATCC 31821 / ZM4 / CP4), this protein is Ribonuclease 3.